A 450-amino-acid chain; its full sequence is NADP-specific glutamate dehydrogenase (450 aa).

The active site involves Lys-114.

This sequence belongs to the Glu/Leu/Phe/Val dehydrogenases family. In terms of assembly, homohexamer.

It catalyses the reaction L-glutamate + NADP(+) + H2O = 2-oxoglutarate + NH4(+) + NADPH + H(+). This Botryotinia fuckeliana (Noble rot fungus) protein is NADP-specific glutamate dehydrogenase (gdhA).